The chain runs to 317 residues: 3',5'-bisphosphate nucleotidase (317 aa).

Residue aspartate 46 is the Proton acceptor of the active site. Residues glutamate 69, aspartate 118, isoleucine 120, and aspartate 121 each contribute to the Mg(2+) site. Threonine 123 (proton acceptor) is an active-site residue. Position 123 (threonine 123) interacts with adenosine 3',5'-bisphosphate. Serine 198, histidine 203, serine 227, lysine 230, arginine 244, tyrosine 251, and aspartate 257 together coordinate AMP. Adenosine 3',5'-bisphosphate is bound by residues histidine 203, serine 227, lysine 230, and arginine 244. Mg(2+) is bound at residue aspartate 257. Aspartate 257 is an adenosine 3',5'-bisphosphate binding site.

It belongs to the inositol monophosphatase superfamily. As to quaternary structure, monomer. The cofactor is Mg(2+).

The protein resides in the cytoplasm. The enzyme catalyses adenosine 3',5'-bisphosphate + H2O = AMP + phosphate. It catalyses the reaction 1D-myo-inositol 1,4-bisphosphate + H2O = 1D-myo-inositol 4-phosphate + phosphate. Inhibited by Li(2+). Its function is as follows. Phosphatase that converts 3'-phosphoadenosine 5'-phosphate (PAP) to AMP. Is also able to hydrolyze inositol 1,4-bisphosphate but with less efficiency. The chain is 3',5'-bisphosphate nucleotidase from Entamoeba histolytica (strain ATCC 30459 / HM-1:IMSS / ABRM).